The primary structure comprises 127 residues: Small ribosomal subunit protein uS11 (127 aa).

Belongs to the universal ribosomal protein uS11 family. In terms of assembly, part of the 30S ribosomal subunit. Interacts with proteins S7 and S18. Binds to IF-3.

In terms of biological role, located on the platform of the 30S subunit, it bridges several disparate RNA helices of the 16S rRNA. Forms part of the Shine-Dalgarno cleft in the 70S ribosome. The chain is Small ribosomal subunit protein uS11 from Rickettsia rickettsii (strain Iowa).